Here is a 220-residue protein sequence, read N- to C-terminus: uncharacterized protein (220 aa).

A helical transmembrane segment spans residues 10 to 30 (FFIIGGVILSIGLILFFLLGF).

It localises to the membrane. This is an uncharacterized protein from Methanocaldococcus jannaschii (strain ATCC 43067 / DSM 2661 / JAL-1 / JCM 10045 / NBRC 100440) (Methanococcus jannaschii).